Here is a 193-residue protein sequence, read N- to C-terminus: Putative manganese efflux pump MntP (193 aa).

Helical transmembrane passes span leucine 3–glycine 23, valine 39–leucine 59, isoleucine 65–valine 85, leucine 113–valine 133, isoleucine 138–leucine 158, and valine 173–alanine 193.

This sequence belongs to the MntP (TC 9.B.29) family.

The protein resides in the cell inner membrane. Functionally, probably functions as a manganese efflux pump. In Rhodospirillum rubrum (strain ATCC 11170 / ATH 1.1.1 / DSM 467 / LMG 4362 / NCIMB 8255 / S1), this protein is Putative manganese efflux pump MntP.